A 467-amino-acid polypeptide reads, in one-letter code: MVVEEENRSMEEGLLQHQNDRDDRRITACVILSTFVAVCSAFSYGCAAGYTSGAETAIMKELDLSMAQFSAFGSFLNVGGAVGALFSGQLAVILGRRRTLWACDFFCVFGWLSIAFAKNVFWLDLGRISLGIGVGLISYVVPVYIAEITPKHVRGAFTASNQLLQNSGVSLIYFFGTVINWRVMAVIGAIPCILQTIGIFFIPESPRWLAKIRLSKEVESSLHRLRGKDTDVSGEAAEIQVMTKMLEEDSKSSFSDMFQKKYRRTLVVGIGLMLIQQLSGASGITYYSNAIFRKAGFSERLGSMIFGVFVIPKALVGLILVDRWGRRPLLLASAVGMSIGSLLIGVSFTLQQMNVLPELIPIFVFVNILVYFGCFAFGIGGLPWVIMSEIFPINIKVSAGTIVALTSWTSGWFVSYAFNFMFEWSAQGTFYIFAAVGGMSFIFIWMLVPETKGQSLEELQASLTGTS.

Transmembrane regions (helical) follow at residues 26–46 (ITAC…SYGC), 75–95 (FLNV…VILG), 105–125 (FFCV…WLDL), 128–148 (ISLG…IAEI), 155–177 (GAFT…FFGT), 183–203 (VMAV…FFIP), 266–286 (LVVG…GITY), 301–321 (LGSM…LILV), 328–348 (PLLL…GVSF), 359–379 (LIPI…AFGI), 402–422 (IVAL…NFMF), and 428–448 (GTFY…WMLV).

It belongs to the major facilitator superfamily. Sugar transporter (TC 2.A.1.1) family.

It is found in the membrane. In terms of biological role, sugar transporter. The sequence is that of Sugar transporter ERD6-like 11 from Arabidopsis thaliana (Mouse-ear cress).